The sequence spans 274 residues: Type II restriction enzyme XamI (274 aa).

The catalysed reaction is Endonucleolytic cleavage of DNA to give specific double-stranded fragments with terminal 5'-phosphates.. Its function is as follows. A P subtype restriction enzyme that recognizes the double-stranded sequence 5'-GTCGAC-3' and cleaves after G-1. The chain is Type II restriction enzyme XamI (xamIR) from Xanthomonas campestris pv. amaranthicola.